The following is a 490-amino-acid chain: Tegument protein VP16 (490 aa).

Residues 12-37 (MDADGASPPPPRPAGGPKNTPAAPPL) form a disordered region. 4 positions are modified to phosphoserine: serine 18, serine 353, serine 411, and serine 452. The interval 411–490 (STAPPTDVSL…DALGIDEYGG (80 aa)) is transcriptional activation.

This sequence belongs to the herpesviridae tegument protein VP16 protein family. As to quaternary structure, interacts with VP22. Interacts with gH (via C-terminus). Interacts with the virion host shutoff protein (vhs). Interacts with VP11/12. Associates with the VP16-induced complex; binding to host HCFC1 activates VP16 for association with the octamer motif-binding host protein POU2F1, to form a multiprotein-DNA complex responsible for activating transcription of the viral immediate early genes.

It is found in the virion tegument. It localises to the host nucleus. In terms of biological role, transcriptional activator of immediate-early (IE) gene products (alpha genes). Acts as a key activator of lytic infection by initiating the lytic program through the assembly of the transcriptional regulatory VP16-induced complex composed of VP16 and two cellular factors, HCFC1 and POU2F 1. VP16-induced complex represents a regulatory switch: when it is on, it promotes IE-gene expression and thus lytic infection, and when it is off, it limits IE-gene transcription favoring latent infection. May play a role in the aggregation of tegument proteins around nucleocapsids during virus morphogenesis. This is Tegument protein VP16 from Homo sapiens (Human).